Reading from the N-terminus, the 125-residue chain is Large ribosomal subunit protein bL12 (125 aa).

In terms of assembly, homodimer. Part of the ribosomal stalk of the 50S ribosomal subunit. Forms a multimeric L10(L12)X complex, where L10 forms an elongated spine to which 2 to 4 L12 dimers bind in a sequential fashion. Binds GTP-bound translation factors. Two isoforms seem to exist. One is probably dimethylated on Lys-69 and monomethylated on Lys-86 while the other is probably acetylated or trimethylated on both Lys-86 and Lys-89.

In terms of biological role, forms part of the ribosomal stalk which helps the ribosome interact with GTP-bound translation factors. Is thus essential for accurate translation. The sequence is that of Large ribosomal subunit protein bL12 from Rhodopseudomonas palustris (strain ATCC BAA-98 / CGA009).